The sequence spans 347 residues: Vitellogenin-3 (347 aa).

The first 15 residues, methionine 1–alanine 15, serve as a signal peptide directing secretion. Asparagine 80 is a glycosylation site (N-linked (GlcNAc...) asparagine). Positions proline 104–serine 118 are enriched in low complexity. Disordered regions lie at residues proline 104–cysteine 174 and glutamine 200–glycine 234. Residues proline 124–isoleucine 133 show a composition bias toward basic and acidic residues. The span at serine 144–serine 163 shows a compositional bias: low complexity. Basic and acidic residues predominate over residues serine 164 to cysteine 174. N-linked (GlcNAc...) asparagine glycosylation occurs at asparagine 208. The span at serine 209–serine 219 shows a compositional bias: low complexity.

Phosvitin, an egg yolk storage protein, is one of the most highly phosphorylated (10%) proteins in nature. Post-translationally, cathepsin D is responsible for intraoocytic processing of vitellogenin. In terms of processing, may contain intrachain disulfide bonds. In terms of tissue distribution, produced by the liver, secreted into the blood and then sequestered by receptor mediated endocytosis into growing oocytes, where it is generally cleaved, giving rise to the respective yolk components.

Its function is as follows. Precursor of the egg-yolk proteins that are sources of nutrients during early development of oviparous organisms. Functionally, phosvitin is believed to be of importance in sequestering calcium, iron and other cations for the developing embryo. This is Vitellogenin-3 (VTG3) from Gallus gallus (Chicken).